The following is a 516-amino-acid chain: Lysine--tRNA ligase (516 aa).

Positions 1–23 are disordered; sequence MTEPNRAQAAPASPTAELPAADE. Positions 426 and 433 each coordinate Mg(2+).

It belongs to the class-II aminoacyl-tRNA synthetase family. In terms of assembly, homodimer. The cofactor is Mg(2+).

The protein localises to the cytoplasm. It carries out the reaction tRNA(Lys) + L-lysine + ATP = L-lysyl-tRNA(Lys) + AMP + diphosphate. This chain is Lysine--tRNA ligase, found in Cupriavidus pinatubonensis (strain JMP 134 / LMG 1197) (Cupriavidus necator (strain JMP 134)).